Consider the following 760-residue polypeptide: Cyclin-D-binding Myb-like transcription factor 1 (760 aa).

The interaction with CCND2 stretch occupies residues Met1–Glu237. A required for transcriptional activation region spans residues Val87 to Arg170. Residues Val87 to Met458 are required for DNA-binding. Residues Gly176–His760 are interaction with CCND1, CCND2 and CCND3. A Myb-like 1 domain is found at Gly225–Arg263. Positions Lys268–Gln333 constitute an HTH myb-type domain. A DNA-binding region (H-T-H motif) is located at residues Trp306–Leu329. Positions Trp339–Lys388 constitute a Myb-like 2 domain. Disordered regions lie at residues Lys414 to Ser435 and Ile738 to His760. Residues Ala459–His760 form a required for transcriptional activation region.

Belongs to the DMTF1 family. As to quaternary structure, interacts with the D-type cyclins CCND1, CCND2 and CCND3. Interaction with D-type cyclins may modulate transcriptional activation by this protein. Phosphorylated by the cyclin-D2/CDK4, cyclin-D3/CDK4 and cyclin-D2/CDK6 complexes and to a lesser extent by the cyclin-D1/CDK4 complex. As to expression, expressed at relatively low levels in colonic mucosa, ovary, peripheral leukocytes, prostate and small intestine, and at higher levels in spleen, testis and thymus. Expressed in multiple regions of the brain and CNS including amygdala, caudate, corpus callosum, hippocampus, substantia nigra and subthalamic nucleus. Isoform 1 is the predominant isoform in monocytes, macrophages and neutrophils, isoform 2 is most strongly expressed in peripheral blood leukocytes and quiescent CD34 positive cells, and isoform 3 is expressed at low levels in all hematopoietic cell types. Expression is frequently reduced in non-small-cell lung carcinomas (NSCLC) due to hemizygous gene deletion, strongly suggesting that this locus is haploinsufficient for tumor suppression. Loss of this locus frequently occurs in tumors which retain wild-type CDKN2A/ARF and p53/TP53 loci. Hemizygous gene deletion has also been observed in leukemic blasts from patients with abnormalities of the long arm of chromosome 7.

Its subcellular location is the nucleus. Its function is as follows. Transcriptional activator which activates the CDKN2A/ARF locus in response to Ras-Raf signaling, thereby promoting p53/TP53-dependent growth arrest. Binds to the consensus sequence 5'-CCCG[GT]ATGT-3'. Isoform 1 may cooperate with MYB to activate transcription of the ANPEP gene. Isoform 2 may antagonize transcriptional activation by isoform 1. The sequence is that of Cyclin-D-binding Myb-like transcription factor 1 (DMTF1) from Homo sapiens (Human).